Here is an 82-residue protein sequence, read N- to C-terminus: MRLVVCLVFLASFALVCQGQVYKGGYTRPIPRPPPFVRPLPGGPIGPYNGCPISCRGISFSQARSYCSRLGRCCHVGKGYSG.

The signal sequence occupies residues 1-19; sequence MRLVVCLVFLASFALVCQG. A Pyrrolidone carboxylic acid modification is found at Gln-20. 2 cysteine pairs are disulfide-bonded: Cys-55/Cys-73 and Cys-67/Cys-74. The residue at position 81 (Ser-81) is a Serine amide.

Belongs to the penaeidin family.

The protein localises to the cytoplasmic granule. Antibacterial and antifungal activity. Presents chitin-binding activity. This Penaeus vannamei (Whiteleg shrimp) protein is Penaeidin-3h.